The chain runs to 940 residues: Antiviral innate immune response receptor RIG-I (940 aa).

CARD domains are found at residues 1 to 87 (MTAE…GLCE) and 92 to 172 (WDFQ…KTLK). Glycyl lysine isopeptide (Lys-Gly) (interchain with G-Cter in ubiquitin) cross-links involve residues lysine 48, lysine 96, lysine 154, lysine 164, lysine 172, and lysine 190. An interaction with ZC3HAV1 region spans residues 219–928 (ENQNLSQNSC…LSFDAAEMAG (710 aa)). Positions 249-428 (ALPAQNGKNT…AEATEYICKL (180 aa)) constitute a Helicase ATP-binding domain. 262–269 (APTGCGKT) is an ATP binding site. The DECH box motif lies at 370-373 (DECH). In terms of domain architecture, Helicase C-terminal spans 613–779 (KLRDLCFILQ…ILQTWDEAVF (167 aa)). Residues 738 to 928 (GSKCFLLTAN…LSFDAAEMAG (191 aa)) form a mediates interaction with RNF135 region. Threonine 773 carries the phosphothreonine; by CK2 modification. An RLR CTR domain is found at 795–928 (DNQGKPEPVP…LSFDAAEMAG (134 aa)). A Zn(2+)-binding site is contributed by cysteine 813. Lysine 815 participates in a covalent cross-link: Glycyl lysine isopeptide (Lys-Gly) (interchain with G-Cter in ubiquitin). Cysteine 816 contributes to the Zn(2+) binding site. N6-acetyllysine is present on lysine 861. 2 residues coordinate Zn(2+): cysteine 867 and cysteine 872. Lysine 912 is modified (N6-acetyllysine).

Belongs to the helicase family. RLR subfamily. Monomer; maintained as a monomer in an autoinhibited state. Upon binding of viral RNAs and conformational shift, homooligomerizes and forms filaments on these molecules. Interacts (via tandem CARD domain) with MAVS/IPS1 promoting its filamentation. Interacts with DHX58/LGP2, IKBKE, TBK1 and STING1. Interacts (via CARD domain) with TRIM25 (via SPRY domain). Interacts (double-stranded RNA-bound oligomeric form) with RNF135 (homodimer); involved in RNA length-dependent activation of the RIG-I signaling pathway. Interacts with CYLD. Interacts with NLRC5; blocks the interaction of MAVS/IPS1 to RIGI. Interacts with SRC. Interacts with DDX60. Interacts with ZC3HAV1 (via zinc-fingers) in an RNA-dependent manner. Interacts (via tandem CARD domain) with SEC14L1; the interaction is direct and impairs the interaction of RIGI with MAVS/IPS1. Interacts with VCP/p97; interaction is direct and allows the recruitment of RNF125 and subsequent ubiquitination and degradation. Interacts with NOP53; may regulate RIGI through USP15-mediated 'Lys-63'-linked deubiquitination. Interacts with SIGLEC10, CBL and PTPN11; within a negative feedback loop leading to RIGI degradation. Interacts with LRRC25. Interacts with ZCCHC3; leading to activation of RIGI. Interacts with RNF123. Interacts with UBE2D3 and UBE2N; E2 ubiquitin ligases involved in RNF135-mediated ubiquitination of RIGI and activation of the RIG-I signaling pathway. Interacts with IFIT3. Interacts with DDX3X. Interacts with RTN3. Interacts with ARL16; this interaction is GTP-dependent and induced upon viral infection; this interaction suppresses the RNA sensing activity of RIGI. Interacts with DHX16; this interaction enhances RIGI-mediated antiviral response. Interacts with IRGM; promoting RIGI degradation. Interacts with IFI6; this interaction inhibits RIGI activation. Interacts with ECSIT; this interaction bridges RIGI to the MAVS complex at the mitochondrion. Interacts with YWHAE; this interaction drives RIGI at the mitochondrion. Phosphorylated in resting cells and dephosphorylated in RNA virus-infected cells. Phosphorylation at Thr-773 results in inhibition of its activity while dephosphorylation at these sites results in its activation. In terms of processing, ISGylated. Conjugated to ubiquitin-like protein ISG15 upon IFN-beta stimulation. ISGylation negatively regulates its function in antiviral signaling response. Post-translationally, sumoylated, probably by MUL1; inhibiting its polyubiquitination. Acetylated in response to RNA virus infection. Deacetylated by HDAC6 in the presence of viral mRNAs which is required for detection of viral RNA by RIGI. In terms of processing, ubiquitinated. 'Lys-63' ubiquitination by RNF135, which occurs after RNA-binding and homodimerization, releases the autoinhibition of the CARD domains by the RLR CTR domain, an essential step in the activation of the RIG-I signaling pathway. Also ubiquitinated by TRIM4. Also undergoes 'Lys-48' ubiquitination by RNF125 that leads to proteasomal degradation. 'Lys-48' ubiquitination follows viral infection and is enhanced by 'Lys-63'-linked ubiquitination of the CARD domains that promotes interaction with VCP/p97 and subsequent recruitment of RNF125. Within a negative feedback loop involving SIGLEC10 and PTPN11, 'Lys-48' ubiquitination at Lys-815 by CBL also elicits the proteasomal degradation of RIGI. Deubiquitinated by CYLD, a protease that selectively cleaves 'Lys-63'-linked ubiquitin chains. Also probably deubiquitinated by USP17L2/USP17 that cleaves 'Lys-48'- and 'Lys-63'-linked ubiquitin chains and positively regulates the receptor. Ubiquitinated by TRIM40 via 'Lys-48'-linked ubiquitination; leading to proteasomal degradation. Deubiquitinated by USP27X that cleaves 'Lys-63'-linked ubiquitin chains and inhibits the innate immune receptor activity. Deubiquitinated by USP3 that also cleaves 'Lys-63'-linked ubiquitin chains and inhibits the innate immune receptor activity. Post-translationally, degraded via selective autophagy following interaction with IRGM. IRGM promotes RIGI recruitment to autophagosome membranes, promoting its SQSTM1/p62-dependent autophagic degradation. In terms of tissue distribution, ubiquitously expressed, with highest levels in spleen, liver, intestine and heart. Up-regulated in tracheobronchial lymph node and tonsils during porcine reproductive and respiratory syndrome virus (PRRSV) infection.

It localises to the cytoplasm. It is found in the cell projection. Its subcellular location is the ruffle membrane. The protein resides in the cytoskeleton. The protein localises to the cell junction. It localises to the tight junction. The enzyme catalyses ATP + H2O = ADP + phosphate + H(+). Innate immune receptor that senses cytoplasmic viral nucleic acids and activates a downstream signaling cascade leading to the production of type I interferons and pro-inflammatory cytokines. Forms a ribonucleoprotein complex with viral RNAs on which it homooligomerizes to form filaments. The homooligomerization allows the recruitment of RNF135 an E3 ubiquitin-protein ligase that activates and amplifies the RIG-I-mediated antiviral signaling in an RNA length-dependent manner through ubiquitination-dependent and -independent mechanisms. Upon activation, associates with mitochondria antiviral signaling protein (MAVS/IPS1) that activates the IKK-related kinases TBK1 and IKBKE which in turn phosphorylate the interferon regulatory factors IRF3 and IRF7, activating transcription of antiviral immunological genes including the IFN-alpha and IFN-beta interferons. Ligands include: 5'-triphosphorylated ssRNA and dsRNA and short dsRNA (&lt;1 kb in length). In addition to the 5'-triphosphate moiety, blunt-end base pairing at the 5'-end of the RNA is very essential. Overhangs at the non-triphosphorylated end of the dsRNA RNA have no major impact on its activity. A 3'overhang at the 5'triphosphate end decreases and any 5'overhang at the 5' triphosphate end abolishes its activity. Detects both positive and negative strand RNA viruses including members of the families Paramyxoviridae, Rhabdoviridae: vesicular stomatitis virus (VSV) Orthomyxoviridae: influenza A and B virus, Flaviviridae: Japanese encephalitis virus (JEV). It also detects rotavirus and reovirus. Also involved in antiviral signaling in response to viruses containing a dsDNA genome. Detects dsRNA produced from non-self dsDNA by RNA polymerase III. May play important roles in granulocyte production and differentiation, bacterial phagocytosis and in the regulation of cell migration. This chain is Antiviral innate immune response receptor RIG-I, found in Sus scrofa (Pig).